The chain runs to 100 residues: Ubiquitin-related modifier 1 (100 aa).

At Gly-100 the chain carries 1-thioglycine. A Glycyl lysine isopeptide (Gly-Lys) (interchain with K-? in acceptor proteins) cross-link involves residue Gly-100.

The protein belongs to the URM1 family. In terms of processing, C-terminal thiocarboxylation occurs in 2 steps, it is first acyl-adenylated (-COAMP) via the hesA/moeB/thiF part of UBA4, then thiocarboxylated (-COSH) via the rhodanese domain of UBA4.

It is found in the cytoplasm. It participates in tRNA modification; 5-methoxycarbonylmethyl-2-thiouridine-tRNA biosynthesis. In terms of biological role, acts as a sulfur carrier required for 2-thiolation of mcm(5)S(2)U at tRNA wobble positions of cytosolic tRNA(Lys), tRNA(Glu) and tRNA(Gln). Serves as sulfur donor in tRNA 2-thiolation reaction by being thiocarboxylated (-COSH) at its C-terminus by the MOCS3 homolog UBA4. The sulfur is then transferred to tRNA to form 2-thiolation of mcm(5)S(2)U. Prior mcm(5) tRNA modification by the elongator complex is required for 2-thiolation. Also acts as a ubiquitin-like protein (UBL) that is covalently conjugated via an isopeptide bond to lysine residues of target proteins such as AHP1. The thiocarboxylated form serves as substrate for conjugation and oxidative stress specifically induces the formation of UBL-protein conjugates. The chain is Ubiquitin-related modifier 1 from Eremothecium gossypii (strain ATCC 10895 / CBS 109.51 / FGSC 9923 / NRRL Y-1056) (Yeast).